Consider the following 197-residue polypeptide: MTALYLASASPRRRELLALLDLPFEVLKTEVEEQRHPGESAQVYVQRLAQDKARAGVAVAPQDLPVLGADTIVVLNGQVLEKPRDKEHAQQILSALSGQKHQVMTAVALADRQNMLSAMVVTDVTFRVLSPLEISDYIATGEPMDKAGAYGIQGKGGCFVRAIAGSYHAVVGLPLVETHELLSHFIAQRNVRGIHDS.

Residue Asp70 is the Proton acceptor of the active site.

The protein belongs to the Maf family. YhdE subfamily. It depends on a divalent metal cation as a cofactor.

The protein localises to the cytoplasm. It catalyses the reaction dTTP + H2O = dTMP + diphosphate + H(+). The enzyme catalyses UTP + H2O = UMP + diphosphate + H(+). Its function is as follows. Nucleoside triphosphate pyrophosphatase that hydrolyzes dTTP and UTP. May have a dual role in cell division arrest and in preventing the incorporation of modified nucleotides into cellular nucleic acids. The chain is dTTP/UTP pyrophosphatase from Yersinia pestis bv. Antiqua (strain Antiqua).